We begin with the raw amino-acid sequence, 317 residues long: Retinol dehydrogenase 7 (317 aa).

33-57 (FITGCDSGFGNLLARQLDRRGMRVL) is an NADP(+) binding site. Residue serine 164 coordinates substrate. Residue tyrosine 176 is the Proton acceptor of the active site.

It belongs to the short-chain dehydrogenases/reductases (SDR) family.

Its subcellular location is the microsome. The protein localises to the endoplasmic reticulum. It carries out the reaction all-trans-retinol--[retinol-binding protein] + NAD(+) = all-trans-retinal--[retinol-binding protein] + NADH + H(+). It participates in cofactor metabolism; retinol metabolism. In terms of biological role, acts on retinol bound on cellular retinol-binding protein (CRBP). In Rattus norvegicus (Rat), this protein is Retinol dehydrogenase 7.